The following is a 240-amino-acid chain: tRNA (guanine-N(1)-)-methyltransferase (240 aa).

S-adenosyl-L-methionine contacts are provided by residues Gly-110 and 129–134 (LGDFVL).

The protein belongs to the RNA methyltransferase TrmD family. Homodimer.

Its subcellular location is the cytoplasm. The enzyme catalyses guanosine(37) in tRNA + S-adenosyl-L-methionine = N(1)-methylguanosine(37) in tRNA + S-adenosyl-L-homocysteine + H(+). In terms of biological role, specifically methylates guanosine-37 in various tRNAs. This is tRNA (guanine-N(1)-)-methyltransferase from Clostridium botulinum (strain Kyoto / Type A2).